The primary structure comprises 555 residues: Transmembrane protein 87A (555 aa).

Residues 1-21 form the signal peptide; sequence MAVAAWLQVSPVIFLLLGAQP. Residues 22–225 lie on the Lumenal side of the membrane; that stretch reads FPLSFLGAGP…YEYLTLEDYP (204 aa). 2 cysteine pairs are disulfide-bonded: cysteine 74-cysteine 128 and cysteine 89-cysteine 431. Residues asparagine 79, asparagine 157, and asparagine 160 are each glycosylated (N-linked (GlcNAc...) asparagine). A helical membrane pass occupies residues 226–246; sequence LMIFFMVMCIVYVLFGVLWLA. Residues 247–257 lie on the Cytoplasmic side of the membrane; sequence WSACYWRDLLR. The chain crosses the membrane as a helical span at residues 258-278; sequence IQFWIGAVIFLGMFEKAVFYA. Topologically, residues 279-305 are lumenal; sequence EFQNIRYKGESVQNALVLAELLSAVKR. A helical membrane pass occupies residues 306-322; sequence SLARTLVIIVSLGYGIV. At 323–325 the chain is on the cytoplasmic side; it reads KPR. Residues 326–346 traverse the membrane as a helical segment; the sequence is LGVTLHKVVVAGALYLLFSGM. At 347–361 the chain is on the lumenal side; the sequence is EGVLRVTGAQTDLAS. Residues 362–382 traverse the membrane as a helical segment; that stretch reads LAFIPLAFLDTALCWWIFISL. The Cytoplasmic segment spans residues 383-403; that stretch reads TQTMKLLKLRRNIVKLSLYRH. The chain crosses the membrane as a helical span at residues 404–424; the sequence is FTNTLILAVAASIVFIIWTTM. Residues 425-437 lie on the Lumenal side of the membrane; sequence KFRIVTCQSDWRE. Residues 438 to 458 traverse the membrane as a helical segment; that stretch reads LWVDDAIWRLLFSMILFVIMI. Topologically, residues 459-555 are cytoplasmic; it reads LWRPSANNQR…ITHFERSKME (97 aa). The tract at residues 491–515 is disordered; that stretch reads SFEGMKMRSTKQEPNGTSKVNKAQE. Over residues 502 to 511 the composition is skewed to polar residues; the sequence is QEPNGTSKVN. Residue serine 540 is modified to Phosphoserine.

The protein belongs to the LU7TM family. TMEM87 subfamily. May interact with STOML3; STOML3 potentiates the mechanosensitive ion channel activity associated with TMEM87A. In terms of tissue distribution, highly expressed in sensory neurons responsive to mechanical force.

The protein resides in the cell membrane. The protein localises to the golgi apparatus membrane. It localises to the cell projection. Its subcellular location is the ruffle. Its function is as follows. Potential monoatomic ion channel gated by mechanical force, implicated in normal touch sensitivity through the generation of mechanically activated currents. However, a direct channel activity is debated and an alternative could be that it functions as a chaperone for an unidentified mechanosensitive ion channel. Could also be involved in cell mechanosensitivity regulating cell adhesion and migration. May also be involved in retrograde transport from endosomes to the trans-Golgi network (TGN). The sequence is that of Transmembrane protein 87A from Mus musculus (Mouse).